The following is a 388-amino-acid chain: Flap endonuclease 1 (388 aa).

Residues 1-105 (MGIKNLTSLI…GELAKRYARR (105 aa)) form an N-domain region. Residue D34 coordinates Mg(2+). R71 is a binding site for DNA. D87, E159, E161, D180, and D182 together coordinate Mg(2+). An I-domain region spans residues 123–254 (DVQKFQKRTI…KKSFDMITKH (132 aa)). E159 contributes to the DNA binding site. DNA is bound by residues G232 and D234. D234 provides a ligand contact to Mg(2+). The tract at residues 338-346 (VQTRIDTFF) is interaction with PCNA. The tract at residues 349-388 (IKRPRDEDAGSAKKKQKTVAKPGAAGSKKKPAAKKAAGKK) is disordered. A compositionally biased stretch (basic residues) spans 375–388 (SKKKPAAKKAAGKK).

Belongs to the XPG/RAD2 endonuclease family. FEN1 subfamily. Interacts with PCNA. Three molecules of repG bind to one PCNA trimer with each molecule binding to one PCNA monomer. PCNA stimulates the nuclease activity without altering cleavage specificity. It depends on Mg(2+) as a cofactor. In terms of processing, phosphorylated. Phosphorylation upon DNA damage induces relocalization to the nuclear plasma.

The protein resides in the nucleus. Its subcellular location is the nucleolus. It localises to the nucleoplasm. It is found in the mitochondrion. Its function is as follows. Structure-specific nuclease with 5'-flap endonuclease and 5'-3' exonuclease activities involved in DNA replication and repair. During DNA replication, cleaves the 5'-overhanging flap structure that is generated by displacement synthesis when DNA polymerase encounters the 5'-end of a downstream Okazaki fragment. It enters the flap from the 5'-end and then tracks to cleave the flap base, leaving a nick for ligation. Also involved in the long patch base excision repair (LP-BER) pathway, by cleaving within the apurinic/apyrimidinic (AP) site-terminated flap. Acts as a genome stabilization factor that prevents flaps from equilibrating into structures that lead to duplications and deletions. Also possesses 5'-3' exonuclease activity on nicked or gapped double-stranded DNA, and exhibits RNase H activity. Also involved in replication and repair of rDNA and in repairing mitochondrial DNA. The sequence is that of Flap endonuclease 1 from Heterostelium pallidum (strain ATCC 26659 / Pp 5 / PN500) (Cellular slime mold).